The following is a 227-amino-acid chain: UPF0758 protein Dhaf_4352 (227 aa).

The MPN domain maps to 105-227 (VINSPQDIAH…YISLKERGIL (123 aa)). The Zn(2+) site is built by H176, H178, and D189. The short motif at 176–189 (HNHPSGDPTPSSED) is the JAMM motif element.

It belongs to the UPF0758 family.

The chain is UPF0758 protein Dhaf_4352 from Desulfitobacterium hafniense (strain DSM 10664 / DCB-2).